The chain runs to 212 residues: Imidazole glycerol phosphate synthase subunit HisH (212 aa).

The 211-residue stretch at 2 to 212 (LTAIIDYESG…MIGNFLTWTP (211 aa)) folds into the Glutamine amidotransferase type-1 domain. Cys-87 functions as the Nucleophile in the catalytic mechanism. Catalysis depends on residues His-192 and Glu-194.

Heterodimer of HisH and HisF.

It is found in the cytoplasm. The catalysed reaction is 5-[(5-phospho-1-deoxy-D-ribulos-1-ylimino)methylamino]-1-(5-phospho-beta-D-ribosyl)imidazole-4-carboxamide + L-glutamine = D-erythro-1-(imidazol-4-yl)glycerol 3-phosphate + 5-amino-1-(5-phospho-beta-D-ribosyl)imidazole-4-carboxamide + L-glutamate + H(+). The enzyme catalyses L-glutamine + H2O = L-glutamate + NH4(+). Its pathway is amino-acid biosynthesis; L-histidine biosynthesis; L-histidine from 5-phospho-alpha-D-ribose 1-diphosphate: step 5/9. In terms of biological role, IGPS catalyzes the conversion of PRFAR and glutamine to IGP, AICAR and glutamate. The HisH subunit catalyzes the hydrolysis of glutamine to glutamate and ammonia as part of the synthesis of IGP and AICAR. The resulting ammonia molecule is channeled to the active site of HisF. The protein is Imidazole glycerol phosphate synthase subunit HisH of Ruegeria pomeroyi (strain ATCC 700808 / DSM 15171 / DSS-3) (Silicibacter pomeroyi).